The sequence spans 374 residues: Heme A synthase (374 aa).

The next 8 membrane-spanning stretches (helical) occupy residues 22 to 42 (VAVW…IGAI), 107 to 127 (LWGR…WVRG), 135 to 155 (PTLA…WFMV), 172 to 192 (LHLG…LGLL), 209 to 229 (AWAA…VAGI), 265 to 285 (AAVQ…VLSL), 306 to 326 (AAAT…VVWI), and 327 to 347 (PLAT…VWTL). Residue H271 coordinates heme. A heme-binding site is contributed by H332.

The protein belongs to the COX15/CtaA family. Type 2 subfamily. Interacts with CtaB. Heme b is required as a cofactor.

The protein resides in the cell membrane. It carries out the reaction Fe(II)-heme o + 2 A + H2O = Fe(II)-heme a + 2 AH2. It functions in the pathway porphyrin-containing compound metabolism; heme A biosynthesis; heme A from heme O: step 1/1. Functionally, catalyzes the conversion of heme O to heme A by two successive hydroxylations of the methyl group at C8. The first hydroxylation forms heme I, the second hydroxylation results in an unstable dihydroxymethyl group, which spontaneously dehydrates, resulting in the formyl group of heme A. In Rhodospirillum centenum (strain ATCC 51521 / SW), this protein is Heme A synthase.